The following is a 148-amino-acid chain: Transcription antitermination protein NusB (148 aa).

This sequence belongs to the NusB family.

In terms of biological role, involved in transcription antitermination. Required for transcription of ribosomal RNA (rRNA) genes. Binds specifically to the boxA antiterminator sequence of the ribosomal RNA (rrn) operons. The sequence is that of Transcription antitermination protein NusB from Aquifex aeolicus (strain VF5).